We begin with the raw amino-acid sequence, 115 residues long: T cell receptor beta variable 7-8 (115 aa).

An N-terminal signal peptide occupies residues 1–21; the sequence is MGTRLLCWVVLGFLGTDHTGA. Residues 22-115 enclose the Ig-like domain; it reads GVSQSPRYKV…SAVYLCASSL (94 aa). Cys42 and Cys111 are disulfide-bonded.

In terms of assembly, alpha-beta TR is a heterodimer composed of an alpha and beta chain; disulfide-linked. The alpha-beta TR is associated with the transmembrane signaling CD3 coreceptor proteins to form the TR-CD3 (TcR or TCR). The assembly of alpha-beta TR heterodimers with CD3 occurs in the endoplasmic reticulum where a single alpha-beta TR heterodimer associates with one CD3D-CD3E heterodimer, one CD3G-CD3E heterodimer and one CD247 homodimer forming a stable octameric structure. CD3D-CD3E and CD3G-CD3E heterodimers preferentially associate with TR alpha and TR beta chains, respectively. The association of the CD247 homodimer is the last step of TcR assembly in the endoplasmic reticulum and is required for transport to the cell surface.

The protein resides in the cell membrane. Functionally, v region of the variable domain of T cell receptor (TR) beta chain that participates in the antigen recognition. Alpha-beta T cell receptors are antigen specific receptors which are essential to the immune response and are present on the cell surface of T lymphocytes. Recognize peptide-major histocompatibility (MH) (pMH) complexes that are displayed by antigen presenting cells (APC), a prerequisite for efficient T cell adaptive immunity against pathogens. Binding of alpha-beta TR to pMH complex initiates TR-CD3 clustering on the cell surface and intracellular activation of LCK that phosphorylates the ITAM motifs of CD3G, CD3D, CD3E and CD247 enabling the recruitment of ZAP70. In turn ZAP70 phosphorylates LAT, which recruits numerous signaling molecules to form the LAT signalosome. The LAT signalosome propagates signal branching to three major signaling pathways, the calcium, the mitogen-activated protein kinase (MAPK) kinase and the nuclear factor NF-kappa-B (NF-kB) pathways, leading to the mobilization of transcription factors that are critical for gene expression and essential for T cell growth and differentiation. The T cell repertoire is generated in the thymus, by V-(D)-J rearrangement. This repertoire is then shaped by intrathymic selection events to generate a peripheral T cell pool of self-MH restricted, non-autoaggressive T cells. Post-thymic interaction of alpha-beta TR with the pMH complexes shapes TR structural and functional avidity. The polypeptide is T cell receptor beta variable 7-8 (Homo sapiens (Human)).